A 312-amino-acid chain; its full sequence is MLLVKMTTHIFNADELLQALQQAKAEKNFSSVFSLDWDKLRTAKRNTTVKYVTVNVIVKGKKAPLMFNFQNEKHVGTIPPSTDEEVIRMNAENPKFLVKKRDRDPCLQFNKYKISPPLEDDGLTVKKNEQGEEIYPGDEEKSKLFQIIELLEEAFEDAVQKGPETMKTKHVIKLIQRKISNSAAKNADKPLPNPIARIRIKINSGTNILTPILLNKSKPITLQNGKTSFEELKDEDGVKANPDNIHKLIESHSIHDGIINARSICISNMGISFPLCLEMGVVKVFEKNNGINVDSIYSSDDISTLVNQIAIA.

Belongs to the asfivirus CP312R family.

It localises to the virion. This is an uncharacterized protein from African swine fever virus (isolate Tick/South Africa/Pretoriuskop Pr4/1996) (ASFV).